A 234-amino-acid polypeptide reads, in one-letter code: Preprocaerulein type-4 (234 aa).

Positions 1-26 (MFKGILLCVLFAVLSANPLSQPEGFA) are cleaved as a signal peptide. The propeptide occupies 27-73 (DEEERDVRGLASLLGKALKAALKIGANALGGSPQQREANDERRFADG). Tyrosine 77 carries the post-translational modification Sulfotyrosine. Phenylalanine amide is present on phenylalanine 83. A propeptide spanning residues 87–137 (DDEDDVNERDVRGFGSFLGKALKAGLKIGTHFLGGAPQQREANDERRFADG) is cleaved from the precursor. Position 141 is a sulfotyrosine (tyrosine 141). A Phenylalanine amide modification is found at phenylalanine 147. Positions 151–152 (DG) are excised as a propeptide. Tyrosine 156 is subject to Sulfotyrosine. Phenylalanine amide is present on phenylalanine 162. Positions 166–216 (DDEDDVHERDVRGFGSFLGKALKAALKIGANALGGSPQQREANDERRFADG) are excised as a propeptide. A disordered region spans residues 198 to 234 (LGGSPQQREANDERRFADGQQDYTGWMDFGRRNGEDD). Tyrosine 220 carries the sulfotyrosine modification. At phenylalanine 226 the chain carries Phenylalanine amide. Positions 230–234 (NGEDD) are excised as a propeptide.

This sequence belongs to the gastrin/cholecystokinin family. As to expression, expressed by the skin glands.

The protein resides in the secreted. Its function is as follows. The pharmacological activities of caerulein are quite similar to the physiological activities of gastrin and related peptides. The polypeptide is Preprocaerulein type-4 (Xenopus borealis (Kenyan clawed frog)).